A 492-amino-acid chain; its full sequence is Gamma-aminobutyric acid receptor subunit alpha-3 (492 aa).

The N-terminal stretch at Met1–Gly28 is a signal peptide. The disordered stretch occupies residues Gly28–Pro54. The Extracellular portion of the chain corresponds to Gln29 to Lys274. The span at Glu31–Lys42 shows a compositional bias: basic and acidic residues. Asn63 carries N-linked (GlcNAc...) asparagine glycosylation. Residue Arg119 coordinates 4-aminobutanoate. Asn163 and Asn176 each carry an N-linked (GlcNAc...) asparagine glycan. Thr182 contacts 4-aminobutanoate. An intrachain disulfide couples Cys191 to Cys205. N-linked (GlcNAc...) asparagine glycosylation occurs at Asn228. The helical transmembrane segment at Ile275–Val295 threads the bilayer. Over Ser296 to Pro305 the chain is Cytoplasmic. Residues Ala306 to Ala325 traverse the membrane as a helical segment. Topologically, residues Arg326–Thr336 are extracellular. The helical transmembrane segment at Ala337–Ala357 threads the bilayer. Residues Thr358 to Lys457 are Cytoplasmic-facing. Ser426 is modified (phosphoserine). Thr427 is modified (phosphothreonine). 2 positions are modified to phosphoserine: Ser433 and Ser442. The chain crosses the membrane as a helical span at residues Ile458–Tyr478. Topologically, residues Val479–Gln492 are extracellular.

It belongs to the ligand-gated ion channel (TC 1.A.9) family. Gamma-aminobutyric acid receptor (TC 1.A.9.5) subfamily. GABRA3 sub-subfamily. Heteropentamer, formed by a combination of alpha (GABRA1-6), beta (GABRB1-3), gamma (GABRG1-3), delta (GABRD), epsilon (GABRE), rho (GABRR1-3), pi (GABRP) and theta (GABRQ) chains, each subunit exhibiting distinct physiological and pharmacological properties. Binds UBQLN1. Interacts with GPHN.

Its subcellular location is the postsynaptic cell membrane. The protein resides in the cell membrane. The enzyme catalyses chloride(in) = chloride(out). With respect to regulation, potentiated by etomidate, propofol, pregnanolone and flurazepam. In terms of biological role, alpha subunit of the heteropentameric ligand-gated chloride channel gated by gamma-aminobutyric acid (GABA), a major inhibitory neurotransmitter in the brain. GABA-gated chloride channels, also named GABA(A) receptors (GABAAR), consist of five subunits arranged around a central pore and contain GABA active binding site(s) located at the alpha and beta subunit interface(s). When activated by GABA, GABAARs selectively allow the flow of chloride anions across the cell membrane down their electrochemical gradient. Chloride influx into the postsynaptic neuron following GABAAR opening decreases the neuron ability to generate a new action potential, thereby reducing nerve transmission. The sequence is that of Gamma-aminobutyric acid receptor subunit alpha-3 from Homo sapiens (Human).